The sequence spans 168 residues: uncharacterized protein (168 aa).

Disordered stretches follow at residues 37–74 (GGSK…SQFT), 81–100 (QYNY…PNYY), and 117–168 (MQPF…EETN). Composition is skewed to polar residues over residues 52 to 74 (HSGQ…SQFT) and 82 to 95 (YNYN…TRSV). A compositionally biased stretch (low complexity) spans 120-129 (FNNQSFNNQS). Over residues 130 to 158 (RTHQSKTYQHNQQKRSFNGPRNNGPQNNV) the composition is skewed to polar residues.

This is an uncharacterized protein from Acanthamoeba polyphaga (Amoeba).